The following is a 460-amino-acid chain: Histidinol dehydrogenase (460 aa).

3 residues coordinate substrate: serine 269, glutamine 291, and histidine 294. Positions 291 and 294 each coordinate Zn(2+). Residues glutamate 358 and histidine 359 each act as proton acceptor in the active site. Substrate contacts are provided by histidine 359, aspartate 392, glutamate 446, and histidine 451. Zn(2+) is bound at residue aspartate 392. Zn(2+) is bound at residue histidine 451.

Belongs to the histidinol dehydrogenase family. Requires Zn(2+) as cofactor.

It catalyses the reaction L-histidinol + 2 NAD(+) + H2O = L-histidine + 2 NADH + 3 H(+). The protein operates within amino-acid biosynthesis; L-histidine biosynthesis; L-histidine from 5-phospho-alpha-D-ribose 1-diphosphate: step 9/9. Its function is as follows. Catalyzes the sequential NAD-dependent oxidations of L-histidinol to L-histidinaldehyde and then to L-histidine. The sequence is that of Histidinol dehydrogenase from Rhodopirellula baltica (strain DSM 10527 / NCIMB 13988 / SH1).